We begin with the raw amino-acid sequence, 330 residues long: tRNA U34 carboxymethyltransferase (330 aa).

Residues Lys91, Trp105, Lys110, Gly130, 152-154 (DPS), 181-182 (IE), Met196, Tyr200, and Arg315 contribute to the carboxy-S-adenosyl-L-methionine site.

The protein belongs to the class I-like SAM-binding methyltransferase superfamily. CmoB family. As to quaternary structure, homotetramer.

The enzyme catalyses carboxy-S-adenosyl-L-methionine + 5-hydroxyuridine(34) in tRNA = 5-carboxymethoxyuridine(34) in tRNA + S-adenosyl-L-homocysteine + H(+). Its function is as follows. Catalyzes carboxymethyl transfer from carboxy-S-adenosyl-L-methionine (Cx-SAM) to 5-hydroxyuridine (ho5U) to form 5-carboxymethoxyuridine (cmo5U) at position 34 in tRNAs. This Shewanella oneidensis (strain ATCC 700550 / JCM 31522 / CIP 106686 / LMG 19005 / NCIMB 14063 / MR-1) protein is tRNA U34 carboxymethyltransferase.